We begin with the raw amino-acid sequence, 146 residues long: Hut operon positive regulatory protein (146 aa).

This sequence belongs to the HutP family. Homohexamer.

In terms of biological role, antiterminator that binds to cis-acting regulatory sequences on the mRNA in the presence of histidine, thereby suppressing transcription termination and activating the hut operon for histidine utilization. This is Hut operon positive regulatory protein from Bacillus anthracis (strain CDC 684 / NRRL 3495).